The primary structure comprises 87 residues: MVNMKASMFLTSAGLVPLFVVCYASESEEKEFPKEMLSSIFAVDNDFKQEERDCAGYMRECKEKLCCSGYVCSSRWKWCVLPAPWRR.

The signal sequence occupies residues 1–24 (MVNMKASMFLTSAGLVPLFVVCYA). A propeptide spanning residues 25-52 (SESEEKEFPKEMLSSIFAVDNDFKQEER) is cleaved from the precursor. Intrachain disulfides connect C54-C67, C61-C72, and C66-C79.

This sequence belongs to the neurotoxin 10 (Hwtx-1) family. 51 (Hntx-8) subfamily. Hntx-8 sub-subfamily. As to expression, expressed by the venom gland.

It localises to the secreted. Ion channel inhibitor. This Cyriopagopus hainanus (Chinese bird spider) protein is U3-theraphotoxin-Hhn1a 13.